A 179-amino-acid chain; its full sequence is Large ribosomal subunit protein uL6 (179 aa).

This sequence belongs to the universal ribosomal protein uL6 family. Part of the 50S ribosomal subunit.

Functionally, this protein binds to the 23S rRNA, and is important in its secondary structure. It is located near the subunit interface in the base of the L7/L12 stalk, and near the tRNA binding site of the peptidyltransferase center. The protein is Large ribosomal subunit protein uL6 of Syntrophotalea carbinolica (strain DSM 2380 / NBRC 103641 / GraBd1) (Pelobacter carbinolicus).